The chain runs to 205 residues: Small ribosomal subunit protein uS4 (205 aa).

An S4 RNA-binding domain is found at 110–172; that stretch reads RRLQTIIYRK…VGSPITKEKL (63 aa). The interval 173–205 is disordered; the sequence is MAKPQPASAPKAAAAPKAAAAPAEAAAAPKKEE. Positions 174 to 205 are enriched in low complexity; sequence AKPQPASAPKAAAAPKAAAAPAEAAAAPKKEE.

The protein belongs to the universal ribosomal protein uS4 family. As to quaternary structure, part of the 30S ribosomal subunit. Contacts protein S5. The interaction surface between S4 and S5 is involved in control of translational fidelity.

Functionally, one of the primary rRNA binding proteins, it binds directly to 16S rRNA where it nucleates assembly of the body of the 30S subunit. Its function is as follows. With S5 and S12 plays an important role in translational accuracy. This Methanocella arvoryzae (strain DSM 22066 / NBRC 105507 / MRE50) protein is Small ribosomal subunit protein uS4.